Here is a 147-residue protein sequence, read N- to C-terminus: Sec-independent protein translocase protein TatB (147 aa).

A helical membrane pass occupies residues 2–22 (FDGIGFMELLLIGVLGLVVLG). A disordered region spans residues 68–147 (ESKGLSNLSP…DTRSNPKANG (80 aa)). The span at 71–97 (GLSNLSPELQESIDQLKQAAQSVNRPY) shows a compositional bias: polar residues. Residues 112–133 (PASQSVSSEASPTASSAPTSEP) show a composition bias toward low complexity.

It belongs to the TatB family. In terms of assembly, the Tat system comprises two distinct complexes: a TatABC complex, containing multiple copies of TatA, TatB and TatC subunits, and a separate TatA complex, containing only TatA subunits. Substrates initially bind to the TatABC complex, which probably triggers association of the separate TatA complex to form the active translocon.

It is found in the cell inner membrane. Part of the twin-arginine translocation (Tat) system that transports large folded proteins containing a characteristic twin-arginine motif in their signal peptide across membranes. Together with TatC, TatB is part of a receptor directly interacting with Tat signal peptides. TatB may form an oligomeric binding site that transiently accommodates folded Tat precursor proteins before their translocation. The sequence is that of Sec-independent protein translocase protein TatB from Shewanella sp. (strain MR-4).